The sequence spans 338 residues: MGNALRFLYGHCCKPTVEDHYQPPHGYGVSTATVGVSALAHDLFHFENTSQIPEGLTKYVVSSKKAQTNWYKKLSQAWREAKPPPQTAEQATRLIILTLKRHQKADVKGLLRFYGLPLSNNPSTEATTVVAPPQADQGVKFELHTLPVDVKAVADGDTVTVYVNTEDPREASNLPKSVKVAAQERAKARAVRDYVKADALQKNIVDAGYRVLSGPNNEDILARKYRIRLRGIDSPESSMPFGKEAKEELIKLVVGKCLTVHIYEEDRYGRSVGDIYCNGQFIQEKMLKKGLAWHYTAYDKRPQLSKWEEKARAARVGLWASSNPEKPWEWRKNKRNGK.

The 178-residue stretch at 144 to 321 (HTLPVDVKAV…RAARVGLWAS (178 aa)) folds into the TNase-like domain. Catalysis depends on residues Arg-228, Glu-236, and Arg-270.

This is an uncharacterized protein from Capnoides sempervirens (Rock-harlequin).